We begin with the raw amino-acid sequence, 107 residues long: Anti-adapter protein IraM (107 aa).

It belongs to the IraM/RssC family.

Its subcellular location is the cytoplasm. Inhibits RpoS proteolysis by regulating RssB activity, thereby increasing the stability of the sigma stress factor RpoS during magnesium starvation. This Escherichia coli O7:K1 (strain IAI39 / ExPEC) protein is Anti-adapter protein IraM.